Here is a 183-residue protein sequence, read N- to C-terminus: MRKLPRPFYERDTILVAKELLGKYLVHHDGLEEKIGRIVEVEAYLGQHDLACHSSKGLTKRTKVMFGPAGYAYVYLIYGMYYCMNVVTEKEGIGSAVLIRALEPIKNIQDRTQGPGLLSKAMRIDSKLNHRDLLSNDFYIAEPNSPTDFTIIEKPRIGVHYAKEWANELLRFYIKDNPYISKT.

The protein belongs to the DNA glycosylase MPG family.

The protein is Putative 3-methyladenine DNA glycosylase of Legionella pneumophila (strain Corby).